The sequence spans 136 residues: Large ribosomal subunit protein uL16 (136 aa).

This sequence belongs to the universal ribosomal protein uL16 family. Part of the 50S ribosomal subunit.

Its function is as follows. Binds 23S rRNA and is also seen to make contacts with the A and possibly P site tRNAs. This is Large ribosomal subunit protein uL16 from Rickettsia rickettsii (strain Iowa).